The primary structure comprises 390 residues: S-adenosylmethionine synthase 2 (390 aa).

E9 lines the Mg(2+) pocket. Residue H15 participates in ATP binding. E43 is a K(+) binding site. 2 residues coordinate L-methionine: E56 and Q99. ATP is bound by residues 167–169 (DGK), 235–238 (SGRF), D246, 252–253 (RK), A269, K273, and K277. D246 lines the L-methionine pocket. L-methionine is bound at residue K277.

This sequence belongs to the AdoMet synthase family. In terms of assembly, homotetramer. Requires Mn(2+) as cofactor. The cofactor is Mg(2+). It depends on Co(2+) as a cofactor. K(+) serves as cofactor.

It localises to the cytoplasm. It carries out the reaction L-methionine + ATP + H2O = S-adenosyl-L-methionine + phosphate + diphosphate. It participates in amino-acid biosynthesis; S-adenosyl-L-methionine biosynthesis; S-adenosyl-L-methionine from L-methionine: step 1/1. Functionally, catalyzes the formation of S-adenosylmethionine from methionine and ATP. The reaction comprises two steps that are both catalyzed by the same enzyme: formation of S-adenosylmethionine (AdoMet) and triphosphate, and subsequent hydrolysis of the triphosphate. The chain is S-adenosylmethionine synthase 2 (SAM2) from Petunia hybrida (Petunia).